The primary structure comprises 72 residues: Late effector protein 1 (72 aa).

Positions 1–22 (MKCYLVVVVAALCTLVAQGSVG) are cleaved as a signal peptide. Asn66 carries N-linked (GlcNAc...) asparagine glycosylation.

Belongs to the lep1 family. In terms of assembly, interacts at the cell wall with secreted rep1 repellent peptides.

Its subcellular location is the secreted. The protein resides in the cell wall. Core effector contributing to spore formation and tumor formation at the host plant. Modulates surface hydrophobicity promoting cell-cell or cell-surface contacts. Lep1 and rep1 interact in aerial hyphae to form a strong hydrophobic layer. Plays a crucial role in hyphal aggregation that might be a prerequisite for strong proliferation of diploid cells and for induction of the morphological changes associated with spore formation. The sequence is that of Late effector protein 1 from Sporisorium reilianum (strain SRZ2) (Maize head smut fungus).